The primary structure comprises 531 residues: Probable rhamnogalacturonate lyase A (531 aa).

An N-terminal signal peptide occupies residues 1–20 (MLSKTSLLSLLSLAAGVVNA). 2 disulfides stabilise this stretch: Cys-50-Cys-93 and Cys-184-Cys-193.

It belongs to the polysaccharide lyase 4 family.

It is found in the secreted. The enzyme catalyses Endotype eliminative cleavage of L-alpha-rhamnopyranosyl-(1-&gt;4)-alpha-D-galactopyranosyluronic acid bonds of rhamnogalacturonan I domains in ramified hairy regions of pectin leaving L-rhamnopyranose at the reducing end and 4-deoxy-4,5-unsaturated D-galactopyranosyluronic acid at the non-reducing end.. Its function is as follows. Pectinolytic enzymes consist of four classes of enzymes: pectin lyase, polygalacturonase, pectin methylesterase and rhamnogalacturonase. Degrades the rhamnogalacturonan I (RG-I) backbone of pectin. This chain is Probable rhamnogalacturonate lyase A (rglA), found in Aspergillus niger (strain ATCC MYA-4892 / CBS 513.88 / FGSC A1513).